The sequence spans 430 residues: Phosphomethylpyrimidine synthase (430 aa).

Residues N67, M96, Y125, H161, S183–G185, D224–R227, and E263 each bind substrate. Residue H267 coordinates Zn(2+). A substrate-binding site is contributed by Y290. H331 lines the Zn(2+) pocket. [4Fe-4S] cluster contacts are provided by C406, C409, and C413.

This sequence belongs to the ThiC family. In terms of assembly, homodimer. [4Fe-4S] cluster is required as a cofactor.

The enzyme catalyses 5-amino-1-(5-phospho-beta-D-ribosyl)imidazole + S-adenosyl-L-methionine = 4-amino-2-methyl-5-(phosphooxymethyl)pyrimidine + CO + 5'-deoxyadenosine + formate + L-methionine + 3 H(+). It functions in the pathway cofactor biosynthesis; thiamine diphosphate biosynthesis. Its function is as follows. Catalyzes the synthesis of the hydroxymethylpyrimidine phosphate (HMP-P) moiety of thiamine from aminoimidazole ribotide (AIR) in a radical S-adenosyl-L-methionine (SAM)-dependent reaction. In Campylobacter jejuni subsp. doylei (strain ATCC BAA-1458 / RM4099 / 269.97), this protein is Phosphomethylpyrimidine synthase.